The chain runs to 304 residues: Probable alpha-L-glutamate ligase 2 (304 aa).

One can recognise an ATP-grasp domain in the interval 107 to 290; that stretch reads HQLLARKGVG…IAGAIIDYIV (184 aa). ATP contacts are provided by residues K144, 181 to 182, D190, and 214 to 216; these read EF and RSN. Residues D251, E263, and N265 each coordinate Mg(2+). Residues D251, E263, and N265 each contribute to the Mn(2+) site.

This sequence belongs to the RimK family. Mg(2+) serves as cofactor. Mn(2+) is required as a cofactor.

The protein is Probable alpha-L-glutamate ligase 2 of Hahella chejuensis (strain KCTC 2396).